We begin with the raw amino-acid sequence, 113 residues long: Translation initiation factor 1A (113 aa).

Residues 12–87 form the S1-like domain; sequence EVIRVPLPEG…KRGDIVYRYT (76 aa).

The protein belongs to the eIF-1A family.

In terms of biological role, seems to be required for maximal rate of protein biosynthesis. Enhances ribosome dissociation into subunits and stabilizes the binding of the initiator Met-tRNA(I) to 40 S ribosomal subunits. The chain is Translation initiation factor 1A (eIF1A) from Pyrococcus abyssi (strain GE5 / Orsay).